The chain runs to 373 residues: Probable jasmonic acid carboxyl methyltransferase 2 (373 aa).

Position 18 (tyrosine 18) interacts with S-adenosyl-L-homocysteine. Position 25 (glutamine 25) interacts with jasmonate. Cysteine 59, asparagine 64, aspartate 96, leucine 97, serine 135, and phenylalanine 136 together coordinate S-adenosyl-L-homocysteine. The jasmonate site is built by histidine 156 and tryptophan 157. Residues asparagine 174, aspartate 260, phenylalanine 262, and asparagine 263 each contribute to the Mg(2+) site.

It belongs to the methyltransferase superfamily. Type-7 methyltransferase family. It depends on Mg(2+) as a cofactor.

Its subcellular location is the cytoplasm. The protein resides in the nucleus. The catalysed reaction is jasmonate + S-adenosyl-L-methionine = methyl (-)-jasmonate + S-adenosyl-L-homocysteine. It participates in lipid metabolism; oxylipin biosynthesis. Its function is as follows. Catalyzes the methylation of jasmonate into methyljasmonate, a plant volatile that acts as an important cellular regulator mediating diverse developmental processes and defense responses. This chain is Probable jasmonic acid carboxyl methyltransferase 2, found in Theobroma cacao (Cacao).